A 93-amino-acid chain; its full sequence is Small ribosomal subunit protein uS19 (93 aa).

The protein belongs to the universal ribosomal protein uS19 family.

Its function is as follows. Protein S19 forms a complex with S13 that binds strongly to the 16S ribosomal RNA. This Nitratidesulfovibrio vulgaris (strain DSM 19637 / Miyazaki F) (Desulfovibrio vulgaris) protein is Small ribosomal subunit protein uS19.